The following is a 372-amino-acid chain: Chaperone protein DnaJ (372 aa).

In terms of domain architecture, J spans 5–69 (DYYEVLGLTK…QKKARYDQFG (65 aa)). A CR-type zinc finger spans residues 129-211 (GKETEIEIPK…CRGEGKVQKR (83 aa)). Zn(2+) is bound by residues C142, C145, C159, C162, C185, C188, C199, and C202. CXXCXGXG motif repeat units follow at residues 142-149 (CETCHGSG), 159-166 (CSTCNGAG), 185-192 (CTTCHGTG), and 199-206 (CSTCRGEG).

It belongs to the DnaJ family. As to quaternary structure, homodimer. Requires Zn(2+) as cofactor.

It localises to the cytoplasm. In terms of biological role, participates actively in the response to hyperosmotic and heat shock by preventing the aggregation of stress-denatured proteins and by disaggregating proteins, also in an autonomous, DnaK-independent fashion. Unfolded proteins bind initially to DnaJ; upon interaction with the DnaJ-bound protein, DnaK hydrolyzes its bound ATP, resulting in the formation of a stable complex. GrpE releases ADP from DnaK; ATP binding to DnaK triggers the release of the substrate protein, thus completing the reaction cycle. Several rounds of ATP-dependent interactions between DnaJ, DnaK and GrpE are required for fully efficient folding. Also involved, together with DnaK and GrpE, in the DNA replication of plasmids through activation of initiation proteins. This is Chaperone protein DnaJ from Lysinibacillus sphaericus (strain C3-41).